The primary structure comprises 248 residues: Zinc finger CCCH domain-containing protein 36 (248 aa).

2 disordered regions span residues 1 to 37 (MDTR…GLGS) and 87 to 110 (MQGS…VSNF). The C3H1-type 1 zinc-finger motif lies at 36–64 (GSKSKPCTKFFSTSGCPFGENCHFLHYVP). A compositionally biased stretch (gly residues) spans 90 to 103 (SGNGGRFSGRGESG). The KH domain occupies 113-177 (SATARFSVDA…EQISEASAMV (65 aa)). Residues 188-209 (AKKPPGGGLGGGGGMGSEGKPH) form a disordered region. Gly residues predominate over residues 192–204 (PGGGLGGGGGMGS). The segment at 213-240 (NFKTKICERFSKGNCTFGDRCHFAHGEA) adopts a C3H1-type 2 zinc-finger fold.

The sequence is that of Zinc finger CCCH domain-containing protein 36 from Arabidopsis thaliana (Mouse-ear cress).